Here is a 521-residue protein sequence, read N- to C-terminus: GRAS family protein RAD1 (521 aa).

Residues 137–520 (DGSCADGMRL…KPIVAVSCWK (384 aa)) form the GRAS domain. The leucine repeat I (LRI) stretch occupies residues 144 to 212 (MRLVQLLIAC…PIGNNSAGSD (69 aa)). Residues 231 to 301 (FKLVYENCPH…HRVRRLRITA (71 aa)) are VHIID. Residues 262 to 266 (LHVVD) carry the VHIID motif. Positions 311–343 (VIGEELSIYAKNLGIHLEFSIVEKNLENLKPKD) are leucine repeat II (LRII). A PFYRE region spans residues 352–443 (LVVNSILQLH…QFYFAEEIKN (92 aa)). Positions 446–520 (SCEGPLRMER…KPIVAVSCWK (75 aa)) are SAW.

The protein belongs to the GRAS family. Interacts with RAM1. Interacts with NSP2.

The protein localises to the nucleus. Its function is as follows. Transcription factor acting as a regulator of arbuscular mycorrhiza (AM)-related genes (e.g. STR). Required for the morphogenesis of arbuscules upon symbiosis with AM fungi (e.g. Glomus versiforme). Also involved in restricting mycorrhizal colonization of the root meristem. The protein is GRAS family protein RAD1 of Medicago truncatula (Barrel medic).